A 623-amino-acid chain; its full sequence is Arginine decarboxylase 2 (623 aa).

Residue lysine 109 is modified to N6-(pyridoxal phosphate)lysine. 295–305 (LDCGGGLGVDY) is a substrate binding site.

Belongs to the Orn/Lys/Arg decarboxylase class-II family. SpeA subfamily. Requires pyridoxal 5'-phosphate as cofactor. Mg(2+) serves as cofactor. As to expression, expressed in stems (at protein level).

The enzyme catalyses L-arginine + H(+) = agmatine + CO2. The protein operates within amine and polyamine biosynthesis; agmatine biosynthesis; agmatine from L-arginine: step 1/1. The chain is Arginine decarboxylase 2 (ADC2) from Oryza sativa subsp. japonica (Rice).